Reading from the N-terminus, the 181-residue chain is Ribulose bisphosphate carboxylase small subunit 2B, chloroplastic (181 aa).

A chloroplast-targeting transit peptide spans 1–54; it reads MASSMFSSTAVVTSPAQATMVAPFTGLKSSASFPVTRKANNDITSITSNGGRVS.

The protein belongs to the RuBisCO small chain family. Heterohexadecamer of 8 large and 8 small subunits.

It is found in the plastid. The protein resides in the chloroplast. RuBisCO catalyzes two reactions: the carboxylation of D-ribulose 1,5-bisphosphate, the primary event in carbon dioxide fixation, as well as the oxidative fragmentation of the pentose substrate. Both reactions occur simultaneously and in competition at the same active site. Although the small subunit is not catalytic it is essential for maximal activity. In Arabidopsis thaliana (Mouse-ear cress), this protein is Ribulose bisphosphate carboxylase small subunit 2B, chloroplastic (RBCS-2B).